The sequence spans 101 residues: NADH-quinone oxidoreductase subunit K (101 aa).

3 helical membrane passes run 4–24 (LAHY…GIFL), 30–50 (IVLL…FVAF), and 61–81 (VFVF…LAIL).

The protein belongs to the complex I subunit 4L family. In terms of assembly, NDH-1 is composed of 14 different subunits. Subunits NuoA, H, J, K, L, M, N constitute the membrane sector of the complex.

The protein resides in the cell inner membrane. It carries out the reaction a quinone + NADH + 5 H(+)(in) = a quinol + NAD(+) + 4 H(+)(out). Functionally, NDH-1 shuttles electrons from NADH, via FMN and iron-sulfur (Fe-S) centers, to quinones in the respiratory chain. The immediate electron acceptor for the enzyme in this species is believed to be ubiquinone. Couples the redox reaction to proton translocation (for every two electrons transferred, four hydrogen ions are translocated across the cytoplasmic membrane), and thus conserves the redox energy in a proton gradient. The protein is NADH-quinone oxidoreductase subunit K of Ralstonia nicotianae (strain ATCC BAA-1114 / GMI1000) (Ralstonia solanacearum).